The following is a 323-amino-acid chain: MENMGDSSIGPGHPHLPPGFRFHPTDEELVVHYLKKKADSVPLPVSIIAEIDLYKFDPWELPSKASFGEHEWYFFSPRDRKYPNGVRPNRAATSGYWKATGTDKPIFTCNSHKVGVKKALVFYGGKPPKGIKTDWIMHEYRLTDGNLSTAAKPPDLTTTRKNSLRLDDWVLCRIYKKNSSQRPTMERVLLREDLMEGMLSKSSANSSSTSVLDNNDNNNNNNEEHFFDGMVVSSDKRSLCGQYRMGHEASGSSSFGSFLSSKRFHHTGDLNNDNYNVSFVSMLSEIPQSSGFHANGVMDTTSSLADHGVLRQAFQLPNMNWHS.

Positions 16-177 constitute an NAC domain; that stretch reads LPPGFRFHPT…DWVLCRIYKK (162 aa). A DNA-binding region spans residues 114 to 183; the sequence is VGVKKALVFY…IYKKNSSQRP (70 aa). A compositionally biased stretch (low complexity) spans 201 to 221; sequence KSSANSSSTSVLDNNDNNNNN. The interval 201 to 223 is disordered; it reads KSSANSSSTSVLDNNDNNNNNNE.

Expressed specifically in the tapetum.

Its subcellular location is the nucleus. Functionally, transcription factor of the NAC family. May be associated with anther development and pollen production. Required for normal seed development and morphology. The protein is NAC transcription factor 25 (NAC025) of Arabidopsis thaliana (Mouse-ear cress).